The following is a 912-amino-acid chain: Protein translocase subunit SecA (912 aa).

Residues Gln87, 105–109, and Asp512 each bind ATP; that span reads GEGKT. The Zn(2+) site is built by Cys896, Cys898, Cys907, and His908.

Belongs to the SecA family. In terms of assembly, monomer and homodimer. Part of the essential Sec protein translocation apparatus which comprises SecA, SecYEG and auxiliary proteins SecDF-YajC and YidC. The cofactor is Zn(2+).

It is found in the cell inner membrane. The protein localises to the cytoplasm. It catalyses the reaction ATP + H2O + cellular proteinSide 1 = ADP + phosphate + cellular proteinSide 2.. In terms of biological role, part of the Sec protein translocase complex. Interacts with the SecYEG preprotein conducting channel. Has a central role in coupling the hydrolysis of ATP to the transfer of proteins into and across the cell membrane, serving both as a receptor for the preprotein-SecB complex and as an ATP-driven molecular motor driving the stepwise translocation of polypeptide chains across the membrane. This chain is Protein translocase subunit SecA, found in Pseudomonas fluorescens (strain Pf0-1).